Reading from the N-terminus, the 95-residue chain is Aspartyl/glutamyl-tRNA(Asn/Gln) amidotransferase subunit C (95 aa).

The protein belongs to the GatC family. In terms of assembly, heterotrimer of A, B and C subunits.

It catalyses the reaction L-glutamyl-tRNA(Gln) + L-glutamine + ATP + H2O = L-glutaminyl-tRNA(Gln) + L-glutamate + ADP + phosphate + H(+). It carries out the reaction L-aspartyl-tRNA(Asn) + L-glutamine + ATP + H2O = L-asparaginyl-tRNA(Asn) + L-glutamate + ADP + phosphate + 2 H(+). Its function is as follows. Allows the formation of correctly charged Asn-tRNA(Asn) or Gln-tRNA(Gln) through the transamidation of misacylated Asp-tRNA(Asn) or Glu-tRNA(Gln) in organisms which lack either or both of asparaginyl-tRNA or glutaminyl-tRNA synthetases. The reaction takes place in the presence of glutamine and ATP through an activated phospho-Asp-tRNA(Asn) or phospho-Glu-tRNA(Gln). The protein is Aspartyl/glutamyl-tRNA(Asn/Gln) amidotransferase subunit C of Vesicomyosocius okutanii subsp. Calyptogena okutanii (strain HA).